Consider the following 197-residue polypeptide: Imidazoleglycerol-phosphate dehydratase (197 aa).

Belongs to the imidazoleglycerol-phosphate dehydratase family.

Its subcellular location is the cytoplasm. It catalyses the reaction D-erythro-1-(imidazol-4-yl)glycerol 3-phosphate = 3-(imidazol-4-yl)-2-oxopropyl phosphate + H2O. It participates in amino-acid biosynthesis; L-histidine biosynthesis; L-histidine from 5-phospho-alpha-D-ribose 1-diphosphate: step 6/9. The protein is Imidazoleglycerol-phosphate dehydratase of Syntrophus aciditrophicus (strain SB).